A 360-amino-acid polypeptide reads, in one-letter code: Phospho-N-acetylmuramoyl-pentapeptide-transferase (360 aa).

10 consecutive transmembrane segments (helical) span residues 25 to 45 (RGIL…PWMI), 73 to 93 (TMGG…WADL), 97 to 117 (YVWV…VDDY), 142 to 162 (VGAA…TLII), 168 to 188 (ASIP…VGSS), 199 to 219 (GLAI…CYLS), 236 to 256 (AGEL…FLWF), 263 to 283 (VFMG…IAVI), 288 to 308 (IVLF…VIQV), and 338 to 358 (VIVR…ATLK).

Belongs to the glycosyltransferase 4 family. MraY subfamily. It depends on Mg(2+) as a cofactor.

Its subcellular location is the cell inner membrane. It catalyses the reaction UDP-N-acetyl-alpha-D-muramoyl-L-alanyl-gamma-D-glutamyl-meso-2,6-diaminopimeloyl-D-alanyl-D-alanine + di-trans,octa-cis-undecaprenyl phosphate = di-trans,octa-cis-undecaprenyl diphospho-N-acetyl-alpha-D-muramoyl-L-alanyl-D-glutamyl-meso-2,6-diaminopimeloyl-D-alanyl-D-alanine + UMP. It participates in cell wall biogenesis; peptidoglycan biosynthesis. Functionally, catalyzes the initial step of the lipid cycle reactions in the biosynthesis of the cell wall peptidoglycan: transfers peptidoglycan precursor phospho-MurNAc-pentapeptide from UDP-MurNAc-pentapeptide onto the lipid carrier undecaprenyl phosphate, yielding undecaprenyl-pyrophosphoryl-MurNAc-pentapeptide, known as lipid I. This chain is Phospho-N-acetylmuramoyl-pentapeptide-transferase, found in Pseudomonas fluorescens (strain SBW25).